The following is an 85-amino-acid chain: Large ribosomal subunit protein bL27 (85 aa).

A disordered region spans residues 1 to 22 (MAHKKGASSTRNGRDSNAQRLG). Polar residues predominate over residues 7–19 (ASSTRNGRDSNAQ).

The protein belongs to the bacterial ribosomal protein bL27 family.

In Leifsonia xyli subsp. xyli (strain CTCB07), this protein is Large ribosomal subunit protein bL27.